A 404-amino-acid polypeptide reads, in one-letter code: Sorting nexin-5 (404 aa).

Residue A2 is modified to N-acetylalanine. Residues 25 to 172 (LNVDPSLQID…HVFLEYDQDL (148 aa)) enclose the PX domain. Residues 40 to 46 (SERDKVK), 99 to 105 (FDGPREK), and 113 to 116 (EGSM) contribute to the a 1,2-diacyl-sn-glycero-3-phospho-(1D-myo-inositol-4,5-bisphosphate) site. An interaction with DOCK1 region spans residues 169 to 261 (DQDLSVRRKN…HSLALEEPTV (93 aa)). Residues 183–200 (FGGFFKSVVKSADEVLFS) are membrane-binding amphipathic helix. S193 is subject to Phosphoserine. Residues 202-404 (VKEVDDFFEQ…QSCIDLFKNN (203 aa)) enclose the BAR domain. K275 bears the N6-acetyllysine mark.

It belongs to the sorting nexin family. Forms heterodimers with BAR domain-containing sorting nexins SNX1 and SNX2; does not homodimerize. The heterodimers are proposed to self-assemble into helical arrays on the membrane to stabilize and expand local membrane curvature underlying endosomal tubule formation. Thought to be a component of the originally described retromer complex (also called SNX-BAR retromer) which is a pentamer containing the heterotrimeric retromer cargo-selective complex (CSC), also described as vacuolar protein sorting subcomplex (VPS), and a heterodimeric membrane-deforming subcomplex formed between SNX1 or SNX2 and SNX5 or SNX6 (also called SNX-BAR subcomplex); the respective CSC and SNX-BAR subcomplexes associate with low affinity. Interacts with SNX1, SNX2, VPS26A, VPS29, VPS35, DCTN1, DOCK1, MIB1, PIP5K1C. Interacts with HGS; increased by PIP5K1C kinase activity and by PtdIns(3P) and/or PtdIns(3,4)P2. Detected in macrophages (at protein level).

The protein resides in the endosome. It localises to the early endosome. The protein localises to the early endosome membrane. Its subcellular location is the cell membrane. It is found in the cytoplasmic vesicle membrane. The protein resides in the cytoplasm. It localises to the cell projection. The protein localises to the phagocytic cup. Its subcellular location is the ruffle. Involved in several stages of intracellular trafficking. Interacts with membranes containing phosphatidylinositol lipids. Acts in part as component of the retromer membrane-deforming SNX-BAR subcomplex. The SNX-BAR retromer mediates retrograde transport of cargo proteins from endosomes to the trans-Golgi network (TGN) and is involved in endosome-to-plasma membrane transport for cargo protein recycling. The SNX-BAR subcomplex functions to deform the donor membrane into a tubular profile called endosome-to-TGN transport carrier (ETC). Does not have in vitro vesicle-to-membrane remodeling activity. Involved in retrograde transport of lysosomal enzyme receptor IGF2R. May function as link between endosomal transport vesicles and dynactin. Plays a role in the internalization of EGFR after EGF stimulation. Involved in EGFR endosomal sorting and degradation; the function involves PIP5K1C and is retromer-independent. Together with PIP5K1C facilitates HGS interaction with ubiquitinated EGFR, which initiates EGFR sorting to intraluminal vesicles (ILVs) of the multivesicular body for subsequent lysosomal degradation. Involved in E-cadherin sorting and degradation; inhibits PIP5K1C-mediated E-cadherin degradation. Plays a role in macropinocytosis. The polypeptide is Sorting nexin-5 (Snx5) (Mus musculus (Mouse)).